We begin with the raw amino-acid sequence, 615 residues long: Putative lipase ATG15 (615 aa).

Residues 1–22 (MKQLGEEHPLISTKRPRAKKRR) are Cytoplasmic-facing. A helical; Signal-anchor for type II membrane protein membrane pass occupies residues 23-43 (SIAICAAVLTLIAFGFIRFVP). Residues 44–615 (KDILAGGWYE…NSAAHHVSSI (572 aa)) lie on the Lumenal side of the membrane. Asparagine 253, asparagine 276, and asparagine 360 each carry an N-linked (GlcNAc...) asparagine glycan. Serine 378 serves as the catalytic Charge relay system. Positions 520–559 (NKNDEPPLPNPLHPKPPSTVRSSNMPHEQSPNASRSLSSL) are disordered. Pro residues predominate over residues 525–536 (PPLPNPLHPKPP). Positions 538–559 (TVRSSNMPHEQSPNASRSLSSL) are enriched in polar residues. The N-linked (GlcNAc...) asparagine glycan is linked to asparagine 551.

This sequence belongs to the AB hydrolase superfamily. Lipase family. Binds to both phosphatidylinositol (PI) and phosphatidylinositol 3,5-bisphosphate (PIP2).

The protein localises to the endosome. It is found in the multivesicular body membrane. It localises to the prevacuolar compartment membrane. The catalysed reaction is a triacylglycerol + H2O = a diacylglycerol + a fatty acid + H(+). In terms of biological role, lipase which is essential for lysis of subvacuolar cytoplasm to vacuole targeted bodies and intravacuolar autophagic bodies. Involved in the lysis of intravacuolar multivesicular body (MVB) vesicles. The intravacuolar membrane disintegration by ATG15 is critical to life span extension. In Debaryomyces hansenii (strain ATCC 36239 / CBS 767 / BCRC 21394 / JCM 1990 / NBRC 0083 / IGC 2968) (Yeast), this protein is Putative lipase ATG15 (ATG15).